A 254-amino-acid chain; its full sequence is Pyrroloquinoline-quinone synthase (254 aa).

Belongs to the PqqC family.

It carries out the reaction 6-(2-amino-2-carboxyethyl)-7,8-dioxo-1,2,3,4,7,8-hexahydroquinoline-2,4-dicarboxylate + 3 O2 = pyrroloquinoline quinone + 2 H2O2 + 2 H2O + H(+). It functions in the pathway cofactor biosynthesis; pyrroloquinoline quinone biosynthesis. Ring cyclization and eight-electron oxidation of 3a-(2-amino-2-carboxyethyl)-4,5-dioxo-4,5,6,7,8,9-hexahydroquinoline-7,9-dicarboxylic-acid to PQQ. In Rhodopseudomonas palustris (strain TIE-1), this protein is Pyrroloquinoline-quinone synthase.